The sequence spans 509 residues: MDASKKKKTFNFPSAFTILFAILILAVGLTWVIPSGSYSKLTYNSTDNVFVVKAYGVDDKTYPATTDTLDNLNIKIKLSNFTEGVIKKPIAIPGTYQRVEQHHKGIEDITKSMVEGTIEAVDVMVFIFVLGGMIGVINRTGSFNAGLMALVKKTKGNEFFIVFCVSVLMVLGGTTCGIEEEAVAFYPILVPVFLALGYDAIVCVGAIFLAASMGTAFSTINPFSVVIASNAAGIQFTEGIGFRALGLVLGATCVIAYLYWYCKKIKADPSFSYTYDDREEFRQRYMKNFDPNTTIPFSARRKLILTLFCISFPIMIWGVMVGGWWFPQMAASFLAITIIIMFISGLSEKDIMESFTEGASELVGVSLIIGLARGVNLVLEQGMISDTILDYMSNVVSGMPGSVFILGQLVVFIFLGLIVPSSSGLAVLSMPIMAPLADSVGIPRDIVVSAYNWGQYAMLFLAPTGLVLVTLQMLQIPFDRWVKFVMPMIGCLLLIGSILLVVQVSLYSV.

13 consecutive transmembrane segments (helical) span residues 14–34, 117–137, 158–178, 188–208, 209–229, 240–260, 303–323, 324–344, 359–379, 399–419, 423–443, 458–478, and 484–504; these read SAFT…WVIP, TIEA…IGVI, EFFI…TCGI, ILVP…GAIF, LAAS…VIAS, IGFR…YLYW, LILT…MVGG, WWFP…MFIS, ASEL…NLVL, MPGS…GLIV, SGLA…VGIP, MLFL…QIPF, and FVMP…VVQV.

To E.coli YfcC. The protein to B.subtilis YcgA.

It is found in the cell membrane. This is an uncharacterized protein from Haemophilus influenzae (strain ATCC 51907 / DSM 11121 / KW20 / Rd).